Consider the following 143-residue polypeptide: Papain inhibitor (143 aa).

The first 33 residues, 1 to 33 (MREFRRVRRVRFAACALVAAATGITLAAGPASA), serve as a signal peptide directing secretion.

As to quaternary structure, monomer.

It is found in the secreted. In terms of biological role, stress protein produced under hyperthermal stress conditions. Serves as a glutamine and lysine donor substrate for transglutaminase. Inhibits the cysteine proteases papain and bromelain as well as the bovine serine protease trypsin. Has hardly any or no effect on subtilisin, bovine chymotrypsin, proteinase K from T.album, transglutaminase-activating metalloproteinase (TAMEP) from S.mobaraensis, dispase from B.polymyxa, thermolysin from B.thermoproteolyticus or collagenase from C.histolyticum. The polypeptide is Papain inhibitor (pi) (Streptomyces mobaraensis (Streptoverticillium mobaraense)).